The sequence spans 125 residues: Large ribosomal subunit protein bL12 (125 aa).

This sequence belongs to the bacterial ribosomal protein bL12 family. In terms of assembly, homodimer. Part of the ribosomal stalk of the 50S ribosomal subunit. Forms a multimeric L10(L12)X complex, where L10 forms an elongated spine to which 2 to 4 L12 dimers bind in a sequential fashion. Binds GTP-bound translation factors.

In terms of biological role, forms part of the ribosomal stalk which helps the ribosome interact with GTP-bound translation factors. Is thus essential for accurate translation. The protein is Large ribosomal subunit protein bL12 of Chlorobium limicola (strain DSM 245 / NBRC 103803 / 6330).